A 147-amino-acid polypeptide reads, in one-letter code: Transcriptional repressor NrdR (147 aa).

A zinc finger spans residues 3-34 (CPFCGHLETQVVETRVSEDADFVRRRRQCSAC). The 91-residue stretch at 49-139 (PVVVKKDGSR…VYRSFEDVDE (91 aa)) folds into the ATP-cone domain.

Belongs to the NrdR family. Zn(2+) is required as a cofactor.

Negatively regulates transcription of bacterial ribonucleotide reductase nrd genes and operons by binding to NrdR-boxes. The chain is Transcriptional repressor NrdR from Variovorax paradoxus (strain S110).